The chain runs to 1054 residues: Isoleucine--tRNA ligase (1054 aa).

Residues 58-68 carry the 'HIGH' region motif; sequence PFANGLPHYGH. The 'KMSKS' region signature appears at 627-631; sequence KMSKS. Residue Lys-630 coordinates ATP.

It belongs to the class-I aminoacyl-tRNA synthetase family. IleS type 2 subfamily. As to quaternary structure, monomer. It depends on Zn(2+) as a cofactor.

The protein localises to the cytoplasm. It catalyses the reaction tRNA(Ile) + L-isoleucine + ATP = L-isoleucyl-tRNA(Ile) + AMP + diphosphate. Catalyzes the attachment of isoleucine to tRNA(Ile). As IleRS can inadvertently accommodate and process structurally similar amino acids such as valine, to avoid such errors it has two additional distinct tRNA(Ile)-dependent editing activities. One activity is designated as 'pretransfer' editing and involves the hydrolysis of activated Val-AMP. The other activity is designated 'posttransfer' editing and involves deacylation of mischarged Val-tRNA(Ile). The polypeptide is Isoleucine--tRNA ligase (Corynebacterium efficiens (strain DSM 44549 / YS-314 / AJ 12310 / JCM 11189 / NBRC 100395)).